A 210-amino-acid chain; its full sequence is Na(+)-translocating NADH-quinone reductase subunit D (210 aa).

Transmembrane regions (helical) follow at residues Val-10 to Ser-30, Leu-42 to Ile-62, Ile-72 to Ala-92, Val-103 to Met-123, Phe-143 to Phe-163, and Asn-178 to Ile-198.

It belongs to the NqrDE/RnfAE family. Composed of six subunits; NqrA, NqrB, NqrC, NqrD, NqrE and NqrF.

Its subcellular location is the cell inner membrane. The enzyme catalyses a ubiquinone + n Na(+)(in) + NADH + H(+) = a ubiquinol + n Na(+)(out) + NAD(+). Its function is as follows. NQR complex catalyzes the reduction of ubiquinone-1 to ubiquinol by two successive reactions, coupled with the transport of Na(+) ions from the cytoplasm to the periplasm. NqrA to NqrE are probably involved in the second step, the conversion of ubisemiquinone to ubiquinol. The polypeptide is Na(+)-translocating NADH-quinone reductase subunit D (Pseudoalteromonas atlantica (strain T6c / ATCC BAA-1087)).